The primary structure comprises 4015 residues: Hybrid PKS-NRPS synthetase iccA (4015 aa).

The span at 1 to 12 shows a compositional bias: polar residues; sequence MAANDSNNQTKP. A disordered region spans residues 1–20; that stretch reads MAANDSNNQTKPQLPEEPVA. The 430-residue stretch at 16-445 folds into the Ketosynthase family 3 (KS3) domain; that stretch reads EEPVAIVGSS…GTNAHVIIES (430 aa). Active-site for beta-ketoacyl synthase activity residues include Cys-190, His-327, and His-365. Residues 560–885 form a malonyl-CoA:ACP transacylase (MAT) domain region; it reads VFTGQGAQWP…LKRGASDVEA (326 aa). The segment at 954–1091 is N-terminal hotdog fold; it reads HELLGRRTPD…GRLSVHLGEA (138 aa). Positions 954-1260 are dehydratase (DH) domain; the sequence is HELLGRRTPD…TTKMVGEQDA (307 aa). The 308-residue stretch at 954 to 1261 folds into the PKS/mFAS DH domain; that stretch reads HELLGRRTPD…TKMVGEQDAS (308 aa). The active-site Proton acceptor; for dehydratase activity is His-986. The tract at residues 1106–1261 is C-terminal hotdog fold; the sequence is LVNINTDRAY…TKMVGEQDAS (156 aa). Asp-1165 acts as the Proton donor; for dehydratase activity in catalysis. The tract at residues 1400 to 1598 is methyltransferase (MT) domain; sequence KDDMLNRFYM…YSGADMVVHD (199 aa). A ketoreductase (KR) domain region spans residues 2120–2261; it reads KTYLMVGAAG…STATTIGNIG (142 aa). The segment at 2379–2405 is disordered; sequence STLQNDSSQTGGTGNGSSVRRQVEEAQ. In terms of domain architecture, Carrier 1 spans 2409–2488; it reads EAVDAVLDGF…QICTTAAKKV (80 aa). Residue Ser-2448 is modified to O-(pantetheine 4'-phosphoryl)serine. Over residues 2498–2515 the composition is skewed to basic and acidic residues; the sequence is EDAVAEEGGREAASKKEP. 2 disordered regions span residues 2498-2529 and 2545-2597; these read EDAV…PVAP and TISE…VRDE. The span at 2553–2569 shows a compositional bias: low complexity; sequence SAFSNKGSSSSATGASS. Basic and acidic residues predominate over residues 2582-2597; the sequence is TSKDQSHVRPETVRDE. A condensation (C) domain region spans residues 2598–3029; that stretch reads RMSPAQARIW…HVKLKDCVIH (432 aa). The interval 3063–3459 is adenylation (A) (KR) domain; it reads LKSPKNAAIQ…GTLLCLGRLD (397 aa). The reductase (RED) domain stretch occupies residues 3063–3459; the sequence is LKSPKNAAIQ…GTLLCLGRLD (397 aa). Residues 3572–3651 form the Carrier 2 domain; it reads EKMNIREGEL…EMALCVDEQR (80 aa). Ser-3611 is modified (O-(pantetheine 4'-phosphoryl)serine).

The protein in the C-terminal section; belongs to the NRP synthetase family.

It carries out the reaction L-tyrosine + holo-[ACP] + 7 malonyl-CoA + acetyl-CoA + 8 AH2 + 2 S-adenosyl-L-methionine + ATP + 4 H(+) = N-[(4E,6E,10S,12Z,14E)-6,10-dimethyl-3-oxohexadeca-4,6,12,14-tetraenoyl]-L-tyrosyl-[ACP] + 8 A + AMP + 2 S-adenosyl-L-homocysteine + 7 CO2 + diphosphate + 8 CoA + 6 H2O. The protein operates within mycotoxin biosynthesis. Hybrid PKS-NRPS synthetase; part of the gene cluster that mediates the biosynthesis of ilicicolin H, a 4-hydroxy-2-pyridonealkaloid that has potent and broad antifungal activities by inhibiting the mitochondrial respiration chain. IccA assembles the backbone of ilicicolin H. The PKS portion and trans-acting enoyl reductase iccB work together to construct an octaketide, and two methyl groups are introduced by the MT domain during the chain assembly. The nascent chain is then condensed with tyrosine, catalyzed by the C domain, and the resulting PKS-NRPS hybrid is offloaded by the RED domain to form an advanced tetramic acid intermediate. The biosynthesis of ilicicolin H starts with formation of the tetramic acid by the hybrid PKS-NRPS synthetase iccA with the partnering trans-enoyl reductase iccB since iccA lacks a designated enoylreductase (ER) domain. The cytochrome P450 monooxygenase iccC then catalyzes the ring expansion of the tetramate to the acyclic 2-pyridone. The pericyclase iccD further converts the acyclic 2-pyridone into 8-epi-ilicicolin H. Finally, the epimerase iccE converts 8-epi-ilicicolin H into ilicicolin H via epimerization. IccA to iccE are sufficient for ilicicolin H biosynthesis and the roles of the remaining enzymes, iccF, iccG and iccH within the pathway have still to be determined. This Talaromyces variabilis (Penicillium variabile) protein is Hybrid PKS-NRPS synthetase iccA.